The sequence spans 286 residues: MRYIRLCIISLLATLPLAVHASPQPLEQIKQSESQLSGRVGMIEMDLASGRTLTAWRADERFPMMSTFKVVLCGAVLARVDAGDEQLERKIHYRQQDLVDYSPVSEKHLADGMTVGELCAAAITMSDNSAANLLLATVGGPAGLTAFLRQIGDNVTRLDRWETELNEALPGDARDTTTPASMAATLRKLLTSQRLSARSQRQLLQWMVDDRVAGPLIRSVLPAGWFIADKTGAAERGARGIVALLGPNNKAERIVVIYLRDTPASMAERNQQIAGIGAALIEHWQR.

The signal sequence occupies residues 1 to 21 (MRYIRLCIISLLATLPLAVHA). The active-site Acyl-ester intermediate is the Ser-66. The cysteines at positions 73 and 119 are disulfide-linked. Glu-164 (proton acceptor) is an active-site residue. 230–232 (KTG) contacts substrate.

The protein belongs to the class-A beta-lactamase family.

The catalysed reaction is a beta-lactam + H2O = a substituted beta-amino acid. Inhibited 16-fold better by the beta-lactamase inhibitor clavulanic acid than by tazobactam. Functionally, broad spectrum beta-lactamase which hydrolyzes penicillins, as well as cephalosporins except cephamycins. Also hydrolyzes aztreonam, but not imipenem. Confers highly resistance to ceftazidime, cefotaxime, aztreonam and piperacillin. This chain is Beta-lactamase SHV-13 (bla), found in Klebsiella pneumoniae.